Consider the following 875-residue polypeptide: Neurotrypsin (875 aa).

Positions 1–20 are cleaved as a signal peptide; sequence MTLARFVLALVLGALPEVVG. N26 is a glycosylation site (N-linked (GlcNAc...) asparagine). Positions 29 to 68 are disordered; it reads LHHRHRHSPPPGPQYPYYLPTHQRPPRTRPPPPLPRFSRP. The 73-residue stretch at 93–165 folds into the Kringle domain; that stretch reads CPPGEPWVSV…GKVDWGYCDC (73 aa). 20 cysteine pairs are disulfide-bonded: C93-C165, C109-C149, C138-C163, C195-C259, C208-C269, C239-C249, C305-C369, C318-C379, C349-C359, C412-C475, C425-C485, C455-C465, C525-C589, C538-C599, C569-C579, C619-C750, C661-C677, C765-C831, C794-C808, and C821-C850. SRCR domains lie at 170 to 271, 280 to 381, 387 to 487, and 500 to 601; these read VRLR…TCSF, IRLV…SCTP, IRLA…ACYP, and VRLM…ICDY. Residues 619-630 are zymogen activation region; it reads CGLRLLHRRQKR. In terms of domain architecture, Peptidase S1 spans 631-874; the sequence is IIGGKNSLRG…FVPWIKSVTK (244 aa). The Charge relay system role is filled by H676. N683 carries an N-linked (GlcNAc...) asparagine glycan. D726 serves as the catalytic Charge relay system. S825 functions as the Charge relay system in the catalytic mechanism.

The protein belongs to the peptidase S1 family.

The protein resides in the secreted. In terms of biological role, plays a role in neuronal plasticity and the proteolytic action may subserve structural reorganizations associated with learning and memory operations. This Trachypithecus phayrei (Phayre's leaf monkey) protein is Neurotrypsin (PRSS12).